The chain runs to 709 residues: Coiled-coil domain-containing protein 13 (709 aa).

3 coiled-coil regions span residues 70–97 (IFEK…NGRL), 139–178 (ELSK…ASAK), and 206–288 (EVKA…QRQN). S258 bears the Phosphoserine mark. Positions 281–312 (KQLGQRQNKPAGSSSSEVPLSSDSRKMTAQEK) are disordered. Residues 293–302 (SSSSEVPLSS) are compositionally biased toward low complexity. Residues 323–457 (DKQESWEKLA…ELEIGQLSVQ (135 aa)) are a coiled coil. Disordered stretches follow at residues 462–499 (KGGG…LGSS), 512–542 (SALT…QAQA), and 600–641 (KMRL…SSTQ). Residues S469 and S532 each carry the phosphoserine modification. The stretch at 539–604 (QAQAAEMKAL…EQHLEKMRLE (66 aa)) forms a coiled coil.

Interacts with PCM1, CEP290 and PCNT.

The protein localises to the cytoplasm. It localises to the cytoskeleton. The protein resides in the microtubule organizing center. Its subcellular location is the centrosome. It is found in the centriolar satellite. The protein localises to the cilium basal body. In terms of biological role, required for primary cilia formation and promotes the localization of the ciliopathy protein BBS4 to both centriolar satellites and cilia. In Mus musculus (Mouse), this protein is Coiled-coil domain-containing protein 13.